The sequence spans 332 residues: Melanocortin receptor 4 (332 aa).

At 1–43 (MNSTHHHGMYTSLHLWNRSSYGLHGNASESLGKGHPDGGCYEQ) the chain is on the extracellular side. Asn-2, Asn-17, and Asn-26 each carry an N-linked (GlcNAc...) asparagine glycan. 2 disulfides stabilise this stretch: Cys-40-Cys-279 and Cys-271-Cys-277. Residues 44–69 (LFVSPEVFVTLGVISLLENILVIVAI) form a helical membrane-spanning segment. Residues 70 to 81 (AKNKNLHSPMYF) lie on the Cytoplasmic side of the membrane. A helical transmembrane segment spans residues 82-106 (FICSLAVADMLVSVSNGSETIVITL). Glu-100 lines the Ca(2+) pocket. The Extracellular segment spans residues 107–123 (LNSTDTDAQSFTVNIDN). Asn-108 carries an N-linked (GlcNAc...) asparagine glycan. Ca(2+)-binding residues include Asp-122 and Asp-126. Residues 124 to 145 (VIDSVICSSLLASICSLLSIAV) traverse the membrane as a helical segment. At 146–165 (DRYFTIFYALQYHNIMTVRR) the chain is on the cytoplasmic side. Residues 166–186 (VGIIISCIWAACTVSGVLFII) form a helical membrane-spanning segment. The Extracellular portion of the chain corresponds to 187–191 (YSDSS). A helical transmembrane segment spans residues 192 to 215 (AVIICLISMFFTMLVLMASLYVHM). Residues 216–248 (FLMARLHIKRIAVLPGTGTIRQGTNMKGAITLT) are Cytoplasmic-facing. The chain crosses the membrane as a helical span at residues 249–271 (ILIGVFVVCWAPFFLHLLFYISC). Residues 272–280 (PQNPYCVCF) are Extracellular-facing. A helical transmembrane segment spans residues 281 to 304 (MSHFNLYLILIMCNAVIDPLIYAL). The Cytoplasmic segment spans residues 305-332 (RSQELRKTFKEIICFYPLGGICELSSRY). Residue Cys-318 is the site of S-palmitoyl cysteine attachment.

It belongs to the G-protein coupled receptor 1 family. As to quaternary structure, homodimer; disulfide-linked, also forms higher order oligomers. Interacts with GNAS. Interacts with ATRNL1. Interacts with MGRN1; this interaction competes with GNAS-binding and thus inhibits agonist-induced cAMP production. Interacts with MRAP and MRAP2; these associated factors increase ligand-sensitivity and generation of cAMP.

Its subcellular location is the cell membrane. Hormone receptor that acts as a key component of the leptin-melanocortin pathway at the intersection of homeostatic maintenance of energetic state. Plays a role in regulating food intake: activation by a stimulating hormone such as anorexigenic alpha-melanocyte stimulating hormone (alpha-MSH) inhibits appetite, whereas binding to a natural antagonist like Agouti-related protein/AGRP promotes appetite. G-protein-coupled receptor that activates conventional Galphas signaling leading to induction of anorexogenic signaling in the hypothalamus to result in negative energy balance. Regulates the firing activity of neurons from the hypothalamus by alpha-MSH and AGRP independently of Galphas signaling by ligand-induced coupling of closure of inwardly rectifying potassium channel KCNJ13. In intestinal epithelial cells, plays a role in the inhibition of hepatic glucose production via nesfatin-1/NUCB2 leading to increased cyclic adenosine monophosphate (cAMP) levels and glucagon-like peptide 1 (GLP-1) secretion in the intestinal epithelium. This Mus musculus (Mouse) protein is Melanocortin receptor 4 (Mc4r).